We begin with the raw amino-acid sequence, 1233 residues long: Structural maintenance of chromosomes protein 1A (1233 aa).

32 to 39 (GPNGSGKS) serves as a coordination point for ATP. Coiled coils occupy residues 104 to 124 (EYKI…LEKL) and 163 to 503 (ELAQ…KAEI). The span at 284 to 293 (IKEKDSELNQ) shows a compositional bias: basic and acidic residues. Disordered regions lie at residues 284-307 (IKEK…NTSH) and 350-369 (FEER…TLEE). A phosphoserine mark is found at serine 358 and serine 360. Residues 515-629 (VYGRLIDLCQ…DNVEDARRIA (115 aa)) enclose the SMC hinge domain. 2 positions are modified to N6-acetyllysine: lysine 648 and lysine 713. Residues 660 to 935 (KAKARRWDEK…RHNLLQACKM (276 aa)) adopt a coiled-coil conformation. Positions 946-969 (TMDDISQEEGGSQGEESVSGSQRT) are disordered. Residues 953–967 (EEGGSQGEESVSGSQ) are compositionally biased toward low complexity. Residues serine 957, serine 962, serine 966, and serine 970 each carry the phosphoserine modification. The stretch at 991-1068 (KDAQAEEEIK…FEQIKKERFD (78 aa)) forms a coiled coil. Lysine 1037 carries the post-translational modification N6-acetyllysine.

Belongs to the SMC family. SMC1 subfamily. As to quaternary structure, forms a heterodimer with SMC3 in cohesin complexes. Cohesin complexes are composed of the SMC1 (SMC1A or meiosis-specific SMC1B) and SMC3 heterodimer attached via their SMC hinge domain, RAD21 which link them, and one STAG protein (STAG1, STAG2 or meiosis-specific STAG3), which interacts with RAD21. In germ cell cohesin complexes, SMC1A is mutually exclusive with SMC1B. Found in a complex with CDCA5, SMC3 and RAD21, PDS5A/SCC-112 and PDS5B/APRIN. Interacts with STAG3, NDC80, BRAC1, BRAT1 and RPGR. Found in a complex containing POLE and SMC3. The cohesin complex interacts with the cohesin loading complex subunits NIPBL/Scc2 (via HEAT repeats) and MAU2/Scc4. NIPBL directly contacts all members of the complex, RAD21, SMC1A/B, SMC3 and STAG1. Interacts with SYCP2. Post-translationally, phosphorylated upon ionizing radiation or DNA methylation. Phosphorylation of Ser-957 and Ser-966 activates it and is required for S-phase checkpoint activation. Ubiquitinated by the DCX(DCAF15) complex, leading to its degradation.

The protein resides in the nucleus. Its subcellular location is the chromosome. Involved in chromosome cohesion during cell cycle and in DNA repair. Central component of cohesin complex. The cohesin complex is required for the cohesion of sister chromatids after DNA replication. The cohesin complex apparently forms a large proteinaceous ring within which sister chromatids can be trapped. At anaphase, the complex is cleaved and dissociates from chromatin, allowing sister chromatids to segregate. The cohesin complex may also play a role in spindle pole assembly during mitosis. Involved in DNA repair via its interaction with BRCA1 and its related phosphorylation by ATM, or via its phosphorylation by ATR. Works as a downstream effector both in the ATM/NBS1 branch and in the ATR/MSH2 branch of S-phase checkpoint. The polypeptide is Structural maintenance of chromosomes protein 1A (Smc1a) (Rattus norvegicus (Rat)).